Consider the following 303-residue polypeptide: GTPase Era (303 aa).

The Era-type G domain maps to 9-176 (KSGFVSIIGR…VEQIVEHMEE (168 aa)). Residues 17–24 (GRPNVGKS) are G1. 17 to 24 (GRPNVGKS) contacts GTP. Residues 43 to 47 (QTTRN) form a G2 region. Residues 64-67 (DTPG) form a G3 region. GTP is bound by residues 64-68 (DTPGI) and 126-129 (NKID). Positions 126–129 (NKID) are G4. The segment at 155-157 (ISA) is G5. A KH type-2 domain is found at 199-284 (IREKVLHLTK…YLELWVKVQK (86 aa)).

It belongs to the TRAFAC class TrmE-Era-EngA-EngB-Septin-like GTPase superfamily. Era GTPase family. In terms of assembly, monomer.

The protein resides in the cytoplasm. The protein localises to the cell membrane. Functionally, an essential GTPase that binds both GDP and GTP, with rapid nucleotide exchange. Plays a role in 16S rRNA processing and 30S ribosomal subunit biogenesis and possibly also in cell cycle regulation and energy metabolism. The chain is GTPase Era from Shouchella clausii (strain KSM-K16) (Alkalihalobacillus clausii).